A 98-amino-acid chain; its full sequence is Small ribosomal subunit protein uS17B (98 aa).

It belongs to the universal ribosomal protein uS17 family. Part of the 30S ribosomal subunit.

Its function is as follows. One of the primary rRNA binding proteins, it binds specifically to the 5'-end of 16S ribosomal RNA. The protein is Small ribosomal subunit protein uS17B of Bacteroides thetaiotaomicron (strain ATCC 29148 / DSM 2079 / JCM 5827 / CCUG 10774 / NCTC 10582 / VPI-5482 / E50).